The primary structure comprises 161 residues: Probable metalloprotease HVO_1016 (161 aa).

Residues 10-131 form the MPN domain; that stretch reads VGIAADALDF…WEAFDQSGEV (122 aa). Residue Glu-31 is the Proton donor/acceptor of the active site. The Zn(2+) site is built by His-87, His-89, and Asp-100. The JAMM motif motif lies at 87-100; the sequence is HSHPNGVLRPSDAD.

It belongs to the peptidase M67B family. In terms of assembly, monomer and homodimer. Requires Zn(2+) as cofactor.

In terms of biological role, probable metalloprotease. Does not hydrolyze SAMP1- and SAMP2-protein conjugates, diglycine-AMC, Ub-AMC, hemoglobin, cytochrome c, carbonic anhydrase, creatinine phosphokinase, beta-amylase and bovine serum albumin. The sequence is that of Probable metalloprotease HVO_1016 from Haloferax volcanii (strain ATCC 29605 / DSM 3757 / JCM 8879 / NBRC 14742 / NCIMB 2012 / VKM B-1768 / DS2) (Halobacterium volcanii).